The following is a 259-amino-acid chain: Phosphate import ATP-binding protein PstB (259 aa).

The ABC transporter domain maps to 5–248 (IEVNDLNVYY…NIIFSNPSAQ (244 aa)). 37-44 (GPSGCGKS) is a binding site for ATP.

It belongs to the ABC transporter superfamily. Phosphate importer (TC 3.A.1.7) family. In terms of assembly, the complex is composed of two ATP-binding proteins (PstB), two transmembrane proteins (PstC and PstA) and a solute-binding protein (PstS).

Its subcellular location is the cell membrane. The enzyme catalyses phosphate(out) + ATP + H2O = ADP + 2 phosphate(in) + H(+). Functionally, part of the ABC transporter complex PstSACB involved in phosphate import. Responsible for energy coupling to the transport system. This Leifsonia xyli subsp. xyli (strain CTCB07) protein is Phosphate import ATP-binding protein PstB.